The chain runs to 417 residues: Serine--tRNA ligase (417 aa).

232–234 serves as a coordination point for L-serine; sequence TSE. 263-265 provides a ligand contact to ATP; that stretch reads RKE. L-serine is bound at residue Glu-286. 350–353 contacts ATP; sequence EISS. Ser-385 serves as a coordination point for L-serine.

Belongs to the class-II aminoacyl-tRNA synthetase family. Type-1 seryl-tRNA synthetase subfamily. As to quaternary structure, homodimer. The tRNA molecule binds across the dimer.

The protein resides in the cytoplasm. It catalyses the reaction tRNA(Ser) + L-serine + ATP = L-seryl-tRNA(Ser) + AMP + diphosphate + H(+). The catalysed reaction is tRNA(Sec) + L-serine + ATP = L-seryl-tRNA(Sec) + AMP + diphosphate + H(+). It functions in the pathway aminoacyl-tRNA biosynthesis; selenocysteinyl-tRNA(Sec) biosynthesis; L-seryl-tRNA(Sec) from L-serine and tRNA(Sec): step 1/1. In terms of biological role, catalyzes the attachment of serine to tRNA(Ser). Is also able to aminoacylate tRNA(Sec) with serine, to form the misacylated tRNA L-seryl-tRNA(Sec), which will be further converted into selenocysteinyl-tRNA(Sec). The sequence is that of Serine--tRNA ligase from Campylobacter hominis (strain ATCC BAA-381 / DSM 21671 / CCUG 45161 / LMG 19568 / NCTC 13146 / CH001A).